The chain runs to 323 residues: 2-methylene-furan-3-one reductase (323 aa).

Residues lysine 59, 174–175 (GV), 197–200 (STKK), tyrosine 216, isoleucine 254, 265–267 (FVL), and 312–313 (RA) contribute to the NADP(+) site. Lysine 59 contacts substrate.

The protein belongs to the zinc-containing alcohol dehydrogenase family. Quinone oxidoreductase subfamily. Monomer. The N-terminus is blocked. In terms of tissue distribution, expressed in parenchyma tissues of red fruits. Not found in vascular tissues. Also detected in the achenes.

It catalyses the reaction 4-hydroxy-2,5-dimethyl-furan-3(2H)-one + NADP(+) = 4-hydroxy-5-methyl-2-methylenefuran-3(2H)-one + NADPH + H(+). In terms of biological role, enone oxidoreductase involved in the biosynthesis of 4-hydroxy-2,5-dimethyl-3(2H)-furanone (HDMF or furaneol), the key flavor compound in strawberries. Can use both NADH and NADPH as the electron donor. The chain is 2-methylene-furan-3-one reductase (EO) from Fragaria ananassa (Strawberry).